Reading from the N-terminus, the 209-residue chain is UPF0319 protein VF_1616 (209 aa).

A signal peptide spans 1-21 (MKIQSIFAASFCLLSSISAHA).

The protein belongs to the UPF0319 family.

This chain is UPF0319 protein VF_1616, found in Aliivibrio fischeri (strain ATCC 700601 / ES114) (Vibrio fischeri).